The chain runs to 482 residues: Altronate oxidoreductase (482 aa).

An NAD(+)-binding site is contributed by 18 to 29; it reads IIQFGEGNFLRA.

The protein belongs to the mannitol dehydrogenase family. UxaB subfamily.

The catalysed reaction is D-altronate + NAD(+) = keto-D-tagaturonate + NADH + H(+). The protein operates within carbohydrate metabolism; pentose and glucuronate interconversion. The sequence is that of Altronate oxidoreductase from Shigella sonnei (strain Ss046).